The following is a 145-amino-acid chain: UPF0735 ACT domain-containing protein CKL_0858 (145 aa).

One can recognise an ACT domain in the interval 69–144 (TLGLTLAHKA…SVIKVNLAAV (76 aa)).

It belongs to the UPF0735 family.

The chain is UPF0735 ACT domain-containing protein CKL_0858 from Clostridium kluyveri (strain ATCC 8527 / DSM 555 / NBRC 12016 / NCIMB 10680 / K1).